Here is a 145-residue protein sequence, read N- to C-terminus: Large ribosomal subunit protein uL15 (145 aa).

The tract at residues Met-1–Glu-52 is disordered. Composition is skewed to gly residues over residues Arg-21–Val-35 and Ser-42–Glu-52.

Belongs to the universal ribosomal protein uL15 family. As to quaternary structure, part of the 50S ribosomal subunit.

Functionally, binds to the 23S rRNA. This Aeromonas hydrophila subsp. hydrophila (strain ATCC 7966 / DSM 30187 / BCRC 13018 / CCUG 14551 / JCM 1027 / KCTC 2358 / NCIMB 9240 / NCTC 8049) protein is Large ribosomal subunit protein uL15.